A 54-amino-acid chain; its full sequence is Large ribosomal subunit protein bL33A (54 aa).

Belongs to the bacterial ribosomal protein bL33 family.

The protein is Large ribosomal subunit protein bL33A of Mycobacteroides abscessus (strain ATCC 19977 / DSM 44196 / CCUG 20993 / CIP 104536 / JCM 13569 / NCTC 13031 / TMC 1543 / L948) (Mycobacterium abscessus).